The following is a 658-amino-acid chain: Squalene--hopene cyclase (658 aa).

One copy of the PFTB 1 repeat lies at 69–110; sequence EAKIGRYLRRIQGEHGGWSLFYGGDLDLSATVKAYFALKMIG. Catalysis depends on Asp-392, which acts as the Proton donor. 3 PFTB repeats span residues 418–459, 486–526, and 534–584; these read KARA…GALL, MKAA…NVAA, and IQKA…GLMA.

Belongs to the terpene cyclase/mutase family.

It is found in the cell membrane. It carries out the reaction squalene = hop-22(29)-ene. The enzyme catalyses squalene + H2O = hopan-22-ol. The protein operates within secondary metabolite biosynthesis; hopanoid biosynthesis. Catalyzes the cyclization of squalene into hopene. The sequence is that of Squalene--hopene cyclase (shc) from Zymomonas mobilis subsp. mobilis (strain ATCC 31821 / ZM4 / CP4).